The primary structure comprises 342 residues: Heat-inducible transcription repressor HrcA (342 aa).

Belongs to the HrcA family.

Its function is as follows. Negative regulator of class I heat shock genes (grpE-dnaK-dnaJ and groELS operons). Prevents heat-shock induction of these operons. This is Heat-inducible transcription repressor HrcA from Methylibium petroleiphilum (strain ATCC BAA-1232 / LMG 22953 / PM1).